The following is a 245-amino-acid chain: Large ribosomal subunit protein uL3 (245 aa).

An N5-methylglutamine modification is found at Gln152. The disordered stretch occupies residues 224 to 245 (RSKAVQAEAAAPAEAAAPEGDN). Over residues 230 to 245 (AEAAAPAEAAAPEGDN) the composition is skewed to low complexity.

The protein belongs to the universal ribosomal protein uL3 family. Part of the 50S ribosomal subunit. Forms a cluster with proteins L14 and L19. In terms of processing, methylated by PrmB.

One of the primary rRNA binding proteins, it binds directly near the 3'-end of the 23S rRNA, where it nucleates assembly of the 50S subunit. The sequence is that of Large ribosomal subunit protein uL3 from Paracoccus denitrificans (strain Pd 1222).